Consider the following 126-residue polypeptide: Large ribosomal subunit protein bL17 (126 aa).

The protein belongs to the bacterial ribosomal protein bL17 family. Part of the 50S ribosomal subunit. Contacts protein L32.

This chain is Large ribosomal subunit protein bL17, found in Rickettsia felis (strain ATCC VR-1525 / URRWXCal2) (Rickettsia azadi).